We begin with the raw amino-acid sequence, 1177 residues long: MWRWIRQQLGFDPPHQSDTRTIYVANRFPQNGLYTPQKFIDNRIISSKYTVWNFVPKNLFEQFRRVANFYFLIIFLVQLMIDTPTSPVTSGLPLFFVITVTAIKQGYEDWLRHNSDNEVNGAPVYVVRSGGLVKTRSKNIRVGDIVRIAKDEIFPADLVLLSSDRLDGSCHVTTASLDGETNLKTHVAVPETALLQTVANLDTLVAVIECQQPEADLYRFMGRMIITQQMEEIVRPLGPESLLLRGARLKNTKEIFGVAVYTGMETKMALNYKSKSQKRSAVEKSMNTFLIIYLVILISEAVISTILKYTWQAEEKWDEPWYNQKTEHQRNSSKILRFISDFLAFLVLYNFIIPISLYVTVEMQKFLGSFFIGWDLDLYHEESDQKAQVNTSDLNEELGQVEYVFTDKTGTLTENEMQFRECSINGMKYQEINGRLVPEGPTPDSSEGNLSYLSSLSHLNNLSHLTTSSSFRTSPENETELIKEHDLFFKAVSLCHTVQISNVQTDCTGDGPWQSNLAPSQLEYYASSPDEKALVEAAARIGIVFIGNSEETMEVKTLGKLERYKLLHILEFDSDRRRMSVIVQAPSGEKLLFAKGAESSILPKCIGGEIEKTRIHVDEFALKGLRTLCIAYRKFTSKEYEEIDKRIFEARTALQQREEKLAAVFQFIEKDLILLGATAVEDRLQDKVRETIEALRMAGIKVWVLTGDKHETAVSVSLSCGHFHRTMNILELINQKSDSECAEQLRQLARRITEDHVIQHGLVVDGTSLSLALREHEKLFMEVCRNCSAVLCCRMAPLQKAKVIRLIKISPEKPITLAVGDGANDVSMIQEAHVGIGIMGKEGRQAARNSDYAIARFKFLSKLLFVHGHFYYIRIATLVQYFFYKNVCFITPQFLYQFYCLFSQQTLYDSVYLTLYNICFTSLPILIYSLLEQHVDPHVLQNKPTLYRDISKNRLLSIKTFLYWTILGFSHAFIFFFGSYLLIGKDTSLLGNGQMFGNWTFGTLVFTVMVITVTVKMALETHFWTWINHLVTWGSIIFYFVFSLFYGGILWPFLGSQNMYFVFIQLLSSGSAWFAIILMVVTCLFLDIIKKVFDRHLHPTSTEKAQLTETNAGIKCLDSMCCFPEGEAACASVGRMLERVIGRCSPTHISRSWSASDPFYTNDRSILTLSTMDSSTC.

Residues 1-55 lie on the Cytoplasmic side of the membrane; the sequence is MWRWIRQQLGFDPPHQSDTRTIYVANRFPQNGLYTPQKFIDNRIISSKYTVWNFV. Residues 56-77 traverse the membrane as a helical segment; it reads PKNLFEQFRRVANFYFLIIFLV. Residues 78 to 82 lie on the Extracellular side of the membrane; it reads QLMID. A helical membrane pass occupies residues 83 to 104; it reads TPTSPVTSGLPLFFVITVTAIK. Over 105–289 the chain is Cytoplasmic; it reads QGYEDWLRHN…SAVEKSMNTF (185 aa). A helical transmembrane segment spans residues 290-311; it reads LIIYLVILISEAVISTILKYTW. Residues 312-341 lie on the Extracellular side of the membrane; sequence QAEEKWDEPWYNQKTEHQRNSSKILRFISD. Residues 342 to 359 form a helical membrane-spanning segment; sequence FLAFLVLYNFIIPISLYV. The Cytoplasmic portion of the chain corresponds to 360–876; it reads TVEMQKFLGS…HGHFYYIRIA (517 aa). The 4-aspartylphosphate intermediate role is filled by aspartate 407. ATP is bound by residues aspartate 407, lysine 408, threonine 409, glutamate 531, phenylalanine 572, lysine 595, arginine 626, threonine 706, glycine 707, aspartate 708, arginine 794, and lysine 800. A Mg(2+)-binding site is contributed by aspartate 407. Threonine 409 is a Mg(2+) binding site. Aspartate 821 is a Mg(2+) binding site. Asparagine 824 and aspartate 825 together coordinate ATP. Residue aspartate 825 participates in Mg(2+) binding. The helical transmembrane segment at 877-898 threads the bilayer; sequence TLVQYFFYKNVCFITPQFLYQF. The Extracellular segment spans residues 899–910; it reads YCLFSQQTLYDS. The helical transmembrane segment at 911–930 threads the bilayer; sequence VYLTLYNICFTSLPILIYSL. Topologically, residues 931 to 960 are cytoplasmic; that stretch reads LEQHVDPHVLQNKPTLYRDISKNRLLSIKT. Residues 961–982 form a helical membrane-spanning segment; sequence FLYWTILGFSHAFIFFFGSYLL. Over 983-997 the chain is Extracellular; that stretch reads IGKDTSLLGNGQMFG. The chain crosses the membrane as a helical span at residues 998–1020; it reads NWTFGTLVFTVMVITVTVKMALE. At 1021–1025 the chain is on the cytoplasmic side; it reads THFWT. Residues 1026-1047 traverse the membrane as a helical segment; sequence WINHLVTWGSIIFYFVFSLFYG. The Extracellular segment spans residues 1048-1065; that stretch reads GILWPFLGSQNMYFVFIQ. A helical membrane pass occupies residues 1066–1090; the sequence is LLSSGSAWFAIILMVVTCLFLDIIK. Over 1091-1177 the chain is Cytoplasmic; sequence KVFDRHLHPT…TLSTMDSSTC (87 aa). Serine 1154 is subject to Phosphoserine.

It belongs to the cation transport ATPase (P-type) (TC 3.A.3) family. Type IV subfamily. As to quaternary structure, component of a P4-ATPase flippase complex which consists of a catalytic alpha subunit ATP11B and an accessory beta subunit TMEM30A. Requires Mg(2+) as cofactor.

Its subcellular location is the recycling endosome membrane. The protein resides in the early endosome. It localises to the endoplasmic reticulum. It is found in the golgi apparatus. The protein localises to the trans-Golgi network. It carries out the reaction ATP + H2O + phospholipidSide 1 = ADP + phosphate + phospholipidSide 2.. It catalyses the reaction a 1,2-diacyl-sn-glycero-3-phospho-L-serine(out) + ATP + H2O = a 1,2-diacyl-sn-glycero-3-phospho-L-serine(in) + ADP + phosphate + H(+). The enzyme catalyses a 1,2-diacyl-sn-glycero-3-phosphoethanolamine(out) + ATP + H2O = a 1,2-diacyl-sn-glycero-3-phosphoethanolamine(in) + ADP + phosphate + H(+). The ATPase activity is up-regulated by aminophospholipids PS and PE. In terms of biological role, catalytic component of a P4-ATPase flippase complex which catalyzes the hydrolysis of ATP coupled to the transport of aminophospholipids, phosphatidylserines (PS) and phosphatidylethanolamines (PE), from the outer to the inner leaflet of intracellular membranes. May contribute to the maintenance of membrane lipid asymmetry in endosome compartment. The polypeptide is Phospholipid-transporting ATPase IF (ATP11B) (Homo sapiens (Human)).